The following is a 112-amino-acid chain: Nitrogen regulatory protein GlnK1 (112 aa).

Thr-29 is a binding site for ADP. Positions 29 and 38 each coordinate ATP. Residue 52–54 (IVD) participates in 2-oxoglutarate binding. ADP-binding positions include Val-64, 88-90 (DGK), and 101-103 (RVR). ATP-binding positions include Val-64, 86-90 (PGDGK), and 101-103 (RVR).

This sequence belongs to the P(II) protein family. In terms of assembly, homotrimer. Interacts and forms a complex with Amt1.

It localises to the cytoplasm. Formation of the GlnK1/Amt1 complex is decreased in the presence of Mg-ATP or 2-oxoglutarate. The presence of both effectors abolishes the formation of the complex. Its function is as follows. Involved in the regulation of nitrogen metabolism. Regulates the activity of its targets by protein-protein interaction in response to the nitrogen status of the cell. Regulates the activity of the ammonia channel Amt1 via direct interaction. This Methanocaldococcus jannaschii (strain ATCC 43067 / DSM 2661 / JAL-1 / JCM 10045 / NBRC 100440) (Methanococcus jannaschii) protein is Nitrogen regulatory protein GlnK1.